A 290-amino-acid polypeptide reads, in one-letter code: Porphobilinogen deaminase (290 aa).

An S-(dipyrrolylmethanemethyl)cysteine modification is found at C238.

This sequence belongs to the HMBS family. Monomer. The cofactor is dipyrromethane.

The enzyme catalyses 4 porphobilinogen + H2O = hydroxymethylbilane + 4 NH4(+). It participates in porphyrin-containing compound metabolism; protoporphyrin-IX biosynthesis; coproporphyrinogen-III from 5-aminolevulinate: step 2/4. Tetrapolymerization of the monopyrrole PBG into the hydroxymethylbilane pre-uroporphyrinogen in several discrete steps. The polypeptide is Porphobilinogen deaminase (Clostridium botulinum (strain Eklund 17B / Type B)).